Consider the following 1066-residue polypeptide: UPF0182 protein BL1029 (1066 aa).

A disordered region spans residues 12–74 (GNGGDSRRNN…KPASGGSGGS (63 aa)). Positions 44-61 (NAGPSGSSRPPRGPANPR) are enriched in low complexity. Transmembrane regions (helical) follow at residues 77–97 (SKIL…FFGL), 126–146 (LWVA…WLAI), 179–199 (VAVV…NANW), 235–255 (VLAA…VTHV), 282–302 (LGIW…IGVF), 326–346 (VTFI…IWLM), and 372–392 (VTSI…WPVL). Residues 977 to 1044 (DSGAAAGDAE…SQSAMKNGDW (68 aa)) are disordered. Residues 989 to 998 (SGDQSGSDTN) show a composition bias toward polar residues. Residues 1003 to 1016 (GTTDGKSDSGSSSD) are compositionally biased toward low complexity.

This sequence belongs to the UPF0182 family.

The protein resides in the cell membrane. In Bifidobacterium longum (strain NCC 2705), this protein is UPF0182 protein BL1029.